Here is a 162-residue protein sequence, read N- to C-terminus: MMCNCCHCHWRRRCQRLPCALTLLLLLPLAVASEGPNRCDTIYQGFAECLIRLGDGMGRGGELQTVCRSWNDFHACASRVLSGCPEEAAAVWESLQQEARRAPHPDNLHILCGAPVSVRERIAGPETNQETLRATAPALAPAPAPVLLAAALALACLLGPLA.

A signal peptide spans 1–32; it reads MMCNCCHCHWRRRCQRLPCALTLLLLLPLAVA. A136 carries the GPI-anchor amidated alanine lipid modification. Positions 137–162 are cleaved as a propeptide — removed in mature form; it reads PALAPAPAPVLLAAALALACLLGPLA.

The protein belongs to the neuritin family.

The protein localises to the cell membrane. In Mus musculus (Mouse), this protein is Neuritin-like protein (Nrn1l).